The sequence spans 261 residues: 4-hydroxy-tetrahydrodipicolinate reductase (261 aa).

NAD(+)-binding positions include Gly-11–Met-16, Gly-96–Thr-98, and Ala-122–Phe-125. His-152 functions as the Proton donor/acceptor in the catalytic mechanism. His-153 contributes to the (S)-2,3,4,5-tetrahydrodipicolinate binding site. Lys-156 (proton donor) is an active-site residue. Gly-162 to Thr-163 is a binding site for (S)-2,3,4,5-tetrahydrodipicolinate.

This sequence belongs to the DapB family.

Its subcellular location is the cytoplasm. The enzyme catalyses (S)-2,3,4,5-tetrahydrodipicolinate + NAD(+) + H2O = (2S,4S)-4-hydroxy-2,3,4,5-tetrahydrodipicolinate + NADH + H(+). It catalyses the reaction (S)-2,3,4,5-tetrahydrodipicolinate + NADP(+) + H2O = (2S,4S)-4-hydroxy-2,3,4,5-tetrahydrodipicolinate + NADPH + H(+). Its pathway is amino-acid biosynthesis; L-lysine biosynthesis via DAP pathway; (S)-tetrahydrodipicolinate from L-aspartate: step 4/4. Functionally, catalyzes the conversion of 4-hydroxy-tetrahydrodipicolinate (HTPA) to tetrahydrodipicolinate. The chain is 4-hydroxy-tetrahydrodipicolinate reductase from Lactobacillus helveticus (strain DPC 4571).